Reading from the N-terminus, the 602-residue chain is DNA mismatch repair protein MutL (602 aa).

Belongs to the DNA mismatch repair MutL/HexB family.

Its function is as follows. This protein is involved in the repair of mismatches in DNA. It is required for dam-dependent methyl-directed DNA mismatch repair. May act as a 'molecular matchmaker', a protein that promotes the formation of a stable complex between two or more DNA-binding proteins in an ATP-dependent manner without itself being part of a final effector complex. In Geotalea uraniireducens (strain Rf4) (Geobacter uraniireducens), this protein is DNA mismatch repair protein MutL.